Reading from the N-terminus, the 101-residue chain is Small ribosomal subunit protein uS14 (101 aa).

Over residues 1–11 (MAKKSAIETNE) the composition is skewed to basic and acidic residues. The disordered stretch occupies residues 1–24 (MAKKSAIETNERRRKLSQSKAAKR). Positions 12–24 (RRRKLSQSKAAKR) are enriched in basic residues.

This sequence belongs to the universal ribosomal protein uS14 family. As to quaternary structure, part of the 30S ribosomal subunit. Contacts proteins S3 and S10.

In terms of biological role, binds 16S rRNA, required for the assembly of 30S particles and may also be responsible for determining the conformation of the 16S rRNA at the A site. The polypeptide is Small ribosomal subunit protein uS14 (Azorhizobium caulinodans (strain ATCC 43989 / DSM 5975 / JCM 20966 / LMG 6465 / NBRC 14845 / NCIMB 13405 / ORS 571)).